The primary structure comprises 155 residues: Short-chain-enoyl-CoA hydratase (155 aa).

The protein belongs to the enoyl-CoA hydratase/isomerase family.

The enzyme catalyses a short-chain (3S)-3-hydroxyacyl-CoA = a short-chain (2E)-enoyl-CoA + H2O. Its pathway is lipid metabolism; butanoate metabolism. This chain is Short-chain-enoyl-CoA hydratase (crt), found in Clostridioides difficile (Peptoclostridium difficile).